The sequence spans 466 residues: Soluble pyridine nucleotide transhydrogenase (466 aa).

36 to 45 (ERYHNVGGGC) lines the FAD pocket.

This sequence belongs to the class-I pyridine nucleotide-disulfide oxidoreductase family. The cofactor is FAD.

It is found in the cytoplasm. It catalyses the reaction NAD(+) + NADPH = NADH + NADP(+). Functionally, conversion of NADPH, generated by peripheral catabolic pathways, to NADH, which can enter the respiratory chain for energy generation. This is Soluble pyridine nucleotide transhydrogenase from Salmonella gallinarum (strain 287/91 / NCTC 13346).